Reading from the N-terminus, the 276-residue chain is Borealin (276 aa).

The interval 111–158 (KEAKSSANSEDENMAPLKSTMKKKKASKKAPSTSKKPRTLSISKQGGT) is disordered.

Belongs to the borealin family. As to quaternary structure, component of the CPC complex.

It localises to the nucleus. It is found in the chromosome. The protein resides in the centromere. Its subcellular location is the cytoplasm. The protein localises to the cytoskeleton. It localises to the spindle. In terms of biological role, component of the chromosomal passenger complex (CPC), a complex that acts as a key regulator of mitosis. The CPC complex has essential functions at the centromere in ensuring correct chromosome alignment and segregation and is required for chromatin-induced microtubule stabilization and spindle assembly. The protein is Borealin (cdca8) of Danio rerio (Zebrafish).